A 155-amino-acid polypeptide reads, in one-letter code: MAEVESFSLDHTKVKAPYVRLAGRKALAGGVVEKYDLRLAQPNREALPTGALHTLEHLLAGYLRDHLPGVIDLSPMGCRTGFYLVVEGPVGEEKVLEAFAQALKDVLAHEGEVPGASFRECGNYRDHDLPGAKAWAEKVLKAGLRVQATVPLEAR.

Fe cation is bound by residues histidine 53, histidine 57, and cysteine 121.

It belongs to the LuxS family. Homodimer. The cofactor is Fe cation.

It carries out the reaction S-(5-deoxy-D-ribos-5-yl)-L-homocysteine = (S)-4,5-dihydroxypentane-2,3-dione + L-homocysteine. In terms of biological role, involved in the synthesis of autoinducer 2 (AI-2) which is secreted by bacteria and is used to communicate both the cell density and the metabolic potential of the environment. The regulation of gene expression in response to changes in cell density is called quorum sensing. Catalyzes the transformation of S-ribosylhomocysteine (RHC) to homocysteine (HC) and 4,5-dihydroxy-2,3-pentadione (DPD). This is S-ribosylhomocysteine lyase from Thermus thermophilus (strain ATCC BAA-163 / DSM 7039 / HB27).